Here is a 56-residue protein sequence, read N- to C-terminus: ComX pheromone (56 aa).

The propeptide occupies 1 to 50; sequence MMQDLINYFLSYPEVLKKLKNREACLIGFSSNETETIIKAYNDYHLSSPT. Trp54 carries the tryptophan derivative modification. Trp54 carries the 3'-farnesyl-2',N2-cyclotryptophan lipid modification.

In terms of assembly, interacts directly with the sensor histidine kinase ComP and stimulates its activity. In terms of processing, trp-54 is modified by farnesylation, which is essential for activity. Modified by the tryptophan prenyltransferase ComQ before export to the extracellular environment. The type of isoprenyl derivative differs among the different pherotypes and depends on ComX primary sequence.

It is found in the secreted. Part of a major quorum-sensing system that regulates the development of genetic competence. Acts through the activation of the two-component regulatory system ComP/ComA composed of a sensor histidine kinase, ComP, and a response regulator, ComA. This Bacillus mojavensis protein is ComX pheromone.